Consider the following 509-residue polypeptide: Heat shock 70 kDa protein 14-A (509 aa).

Belongs to the heat shock protein 70 family. Component of ribosome-associated complex (RAC).

Its subcellular location is the cytoplasm. It is found in the cytosol. Functionally, component of the ribosome-associated complex (RAC), a complex involved in folding or maintaining nascent polypeptides in a folding-competent state. The sequence is that of Heat shock 70 kDa protein 14-A (hspa14-a) from Xenopus laevis (African clawed frog).